A 388-amino-acid polypeptide reads, in one-letter code: Succinate--CoA ligase [ADP-forming] subunit beta (388 aa).

The ATP-grasp domain occupies 9-244; that stretch reads KQLFKEYGLP…PSQEDAREAH (236 aa). Residues Lys46, 53–55, Glu99, Thr102, and Glu107 each bind ATP; that span reads GRG. Mg(2+) is bound by residues Asn199 and Asp213. Residues Asn264 and 321-323 contribute to the substrate site; that span reads GIV.

This sequence belongs to the succinate/malate CoA ligase beta subunit family. Heterotetramer of two alpha and two beta subunits. Mg(2+) serves as cofactor.

It carries out the reaction succinate + ATP + CoA = succinyl-CoA + ADP + phosphate. It catalyses the reaction GTP + succinate + CoA = succinyl-CoA + GDP + phosphate. The protein operates within carbohydrate metabolism; tricarboxylic acid cycle; succinate from succinyl-CoA (ligase route): step 1/1. Functionally, succinyl-CoA synthetase functions in the citric acid cycle (TCA), coupling the hydrolysis of succinyl-CoA to the synthesis of either ATP or GTP and thus represents the only step of substrate-level phosphorylation in the TCA. The beta subunit provides nucleotide specificity of the enzyme and binds the substrate succinate, while the binding sites for coenzyme A and phosphate are found in the alpha subunit. This chain is Succinate--CoA ligase [ADP-forming] subunit beta, found in Alteromonas mediterranea (strain DSM 17117 / CIP 110805 / LMG 28347 / Deep ecotype).